A 236-amino-acid chain; its full sequence is Phosphoribosylaminoimidazole-succinocarboxamide synthase (236 aa).

Belongs to the SAICAR synthetase family.

The enzyme catalyses 5-amino-1-(5-phospho-D-ribosyl)imidazole-4-carboxylate + L-aspartate + ATP = (2S)-2-[5-amino-1-(5-phospho-beta-D-ribosyl)imidazole-4-carboxamido]succinate + ADP + phosphate + 2 H(+). It functions in the pathway purine metabolism; IMP biosynthesis via de novo pathway; 5-amino-1-(5-phospho-D-ribosyl)imidazole-4-carboxamide from 5-amino-1-(5-phospho-D-ribosyl)imidazole-4-carboxylate: step 1/2. The sequence is that of Phosphoribosylaminoimidazole-succinocarboxamide synthase from Streptococcus equi subsp. zooepidemicus (strain MGCS10565).